The primary structure comprises 434 residues: Nicotinate phosphoribosyltransferase (434 aa).

Histidine 242 is subject to Phosphohistidine; by autocatalysis.

The protein belongs to the NAPRTase family. Post-translationally, transiently phosphorylated on a His residue during the reaction cycle. Phosphorylation strongly increases the affinity for substrates and increases the rate of nicotinate D-ribonucleotide production. Dephosphorylation regenerates the low-affinity form of the enzyme, leading to product release.

It catalyses the reaction nicotinate + 5-phospho-alpha-D-ribose 1-diphosphate + ATP + H2O = nicotinate beta-D-ribonucleotide + ADP + phosphate + diphosphate. It participates in cofactor biosynthesis; NAD(+) biosynthesis; nicotinate D-ribonucleotide from nicotinate: step 1/1. Catalyzes the synthesis of beta-nicotinate D-ribonucleotide from nicotinate and 5-phospho-D-ribose 1-phosphate at the expense of ATP. In Mesorhizobium japonicum (strain LMG 29417 / CECT 9101 / MAFF 303099) (Mesorhizobium loti (strain MAFF 303099)), this protein is Nicotinate phosphoribosyltransferase.